The following is a 423-amino-acid chain: UPF0229 protein VP0986 (423 aa).

Residues 69–112 (GGVRERVHPGNDQFITGDKIERPKGGGQGSGSGEGNASPDGEGQ) are disordered. The span at 93–102 (GGGQGSGSGE) shows a compositional bias: gly residues.

It belongs to the UPF0229 family.

The chain is UPF0229 protein VP0986 from Vibrio parahaemolyticus serotype O3:K6 (strain RIMD 2210633).